The following is a 456-amino-acid chain: Argininosuccinate lyase (456 aa).

This sequence belongs to the lyase 1 family. Argininosuccinate lyase subfamily.

The protein resides in the cytoplasm. The enzyme catalyses 2-(N(omega)-L-arginino)succinate = fumarate + L-arginine. Its pathway is amino-acid biosynthesis; L-arginine biosynthesis; L-arginine from L-ornithine and carbamoyl phosphate: step 3/3. The polypeptide is Argininosuccinate lyase (Listeria monocytogenes serovar 1/2a (strain ATCC BAA-679 / EGD-e)).